Here is a 356-residue protein sequence, read N- to C-terminus: NADH-quinone oxidoreductase subunit H (356 aa).

A run of 8 helical transmembrane segments spans residues Ala-4–Val-24, Leu-79–Gly-99, Gly-127–Trp-147, Ile-166–Leu-186, Met-198–Phe-218, Phe-251–Phe-271, Phe-289–Val-309, and Met-329–Glu-349.

Belongs to the complex I subunit 1 family. In terms of assembly, NDH-1 is composed of 14 different subunits. Subunits NuoA, H, J, K, L, M, N constitute the membrane sector of the complex.

The protein resides in the cell inner membrane. The enzyme catalyses a quinone + NADH + 5 H(+)(in) = a quinol + NAD(+) + 4 H(+)(out). In terms of biological role, NDH-1 shuttles electrons from NADH, via FMN and iron-sulfur (Fe-S) centers, to quinones in the respiratory chain. The immediate electron acceptor for the enzyme in this species is believed to be ubiquinone. Couples the redox reaction to proton translocation (for every two electrons transferred, four hydrogen ions are translocated across the cytoplasmic membrane), and thus conserves the redox energy in a proton gradient. This subunit may bind ubiquinone. This chain is NADH-quinone oxidoreductase subunit H, found in Leptospira biflexa serovar Patoc (strain Patoc 1 / ATCC 23582 / Paris).